Reading from the N-terminus, the 160-residue chain is Phosphopantetheine adenylyltransferase (160 aa).

Serine 10 serves as a coordination point for substrate. ATP-binding positions include serine 10–phenylalanine 11 and histidine 18. Lysine 42, leucine 74, and arginine 88 together coordinate substrate. Residues glycine 89–arginine 91, glutamate 99, and tyrosine 124–serine 130 contribute to the ATP site.

Belongs to the bacterial CoaD family. As to quaternary structure, homohexamer. Mg(2+) serves as cofactor.

Its subcellular location is the cytoplasm. It carries out the reaction (R)-4'-phosphopantetheine + ATP + H(+) = 3'-dephospho-CoA + diphosphate. Its pathway is cofactor biosynthesis; coenzyme A biosynthesis; CoA from (R)-pantothenate: step 4/5. Functionally, reversibly transfers an adenylyl group from ATP to 4'-phosphopantetheine, yielding dephospho-CoA (dPCoA) and pyrophosphate. This chain is Phosphopantetheine adenylyltransferase, found in Bacillus velezensis (strain DSM 23117 / BGSC 10A6 / LMG 26770 / FZB42) (Bacillus amyloliquefaciens subsp. plantarum).